A 463-amino-acid polypeptide reads, in one-letter code: uncharacterized protein (463 aa).

One can recognise an HTH gntR-type domain in the interval 13–81 (IPLYQQLYRY…PRSGWFADYH (69 aa)). Positions 41-60 (KRLLANQLSISQTTVERAYE) form a DNA-binding region, H-T-H motif. At Lys308 the chain carries N6-(pyridoxal phosphate)lysine.

It in the C-terminal section; belongs to the class-I pyridoxal-phosphate-dependent aminotransferase family. Pyridoxal 5'-phosphate serves as cofactor.

This is an uncharacterized protein from Bacillus subtilis (strain 168).